A 110-amino-acid polypeptide reads, in one-letter code: U1-lycotoxin-Ls1kk (110 aa).

The N-terminal stretch at 1-20 (MKFVLLFGVFLVTLFSYSSA) is a signal peptide. Positions 21–44 (EMLDDFDQADEDELLSLIEKEEAR) are excised as a propeptide. Cystine bridges form between cysteine 47-cysteine 62, cysteine 54-cysteine 71, cysteine 61-cysteine 89, and cysteine 73-cysteine 87.

Belongs to the neurotoxin 19 (CSTX) family. 03 subfamily. Expressed by the venom gland.

Its subcellular location is the secreted. The chain is U1-lycotoxin-Ls1kk from Lycosa singoriensis (Wolf spider).